The chain runs to 3095 residues: HD protein homolog (3095 aa).

Disordered stretches follow at residues 105–197 (PHQH…NGNA), 536–561 (QQQQ…TMSG), 1312–1371 (PPQQ…STVI), 1509–1547 (KSTS…TTPS), and 2005–2037 (KELT…KEEE). A compositionally biased stretch (polar residues) spans 115 to 139 (STNLTDHLSQNSVTPSVPTTPNYQQ). Low complexity-rich tracts occupy residues 140–197 (SPST…NGNA) and 536–551 (QQQQ…QQQQ). The span at 552 to 561 (HNLTSSTMSG) shows a compositional bias: polar residues. Low complexity-rich tracts occupy residues 1315-1368 (QQQQ…LNNS), 1510-1547 (STSS…TTPS), and 2008-2018 (TNNNNNNNNNI).

The protein belongs to the huntingtin family.

Its subcellular location is the cytoplasm. It localises to the nucleus. Functionally, may play a role in microtubule-mediated transport or vesicle function. In Dictyostelium discoideum (Social amoeba), this protein is HD protein homolog (htt).